The following is a 392-amino-acid chain: Bifunctional enzyme IspD/IspF (392 aa).

2-C-methyl-D-erythritol 4-phosphate cytidylyltransferase regions lie at residues 1 to 234 and 1 to 235; these read MTES…MMRT and MTES…MRTA. Residues 235–392 form a 2-C-methyl-D-erythritol 2,4-cyclodiphosphate synthase region; the sequence is AVGMGYDVHR…AVATIQLPET (158 aa). The a divalent metal cation site is built by aspartate 241 and histidine 243. 4-CDP-2-C-methyl-D-erythritol 2-phosphate contacts are provided by residues 241-243 and 267-268; these read DVH and HS. Histidine 275 serves as a coordination point for a divalent metal cation. 4-CDP-2-C-methyl-D-erythritol 2-phosphate is bound by residues 289–291, 365–368, phenylalanine 372, and arginine 375; these read DIG and TTTE.

This sequence in the N-terminal section; belongs to the IspD/TarI cytidylyltransferase family. IspD subfamily. In the C-terminal section; belongs to the IspF family. Requires a divalent metal cation as cofactor.

The enzyme catalyses 2-C-methyl-D-erythritol 4-phosphate + CTP + H(+) = 4-CDP-2-C-methyl-D-erythritol + diphosphate. The catalysed reaction is 4-CDP-2-C-methyl-D-erythritol 2-phosphate = 2-C-methyl-D-erythritol 2,4-cyclic diphosphate + CMP. Its pathway is isoprenoid biosynthesis; isopentenyl diphosphate biosynthesis via DXP pathway; isopentenyl diphosphate from 1-deoxy-D-xylulose 5-phosphate: step 2/6. The protein operates within isoprenoid biosynthesis; isopentenyl diphosphate biosynthesis via DXP pathway; isopentenyl diphosphate from 1-deoxy-D-xylulose 5-phosphate: step 4/6. In terms of biological role, bifunctional enzyme that catalyzes the formation of 4-diphosphocytidyl-2-C-methyl-D-erythritol from CTP and 2-C-methyl-D-erythritol 4-phosphate (MEP) (IspD), and catalyzes the conversion of 4-diphosphocytidyl-2-C-methyl-D-erythritol 2-phosphate (CDP-ME2P) to 2-C-methyl-D-erythritol 2,4-cyclodiphosphate (ME-CPP) with a corresponding release of cytidine 5-monophosphate (CMP) (IspF). The sequence is that of Bifunctional enzyme IspD/IspF from Sphingopyxis alaskensis (strain DSM 13593 / LMG 18877 / RB2256) (Sphingomonas alaskensis).